The chain runs to 613 residues: Glutamyl-tRNA(Gln) amidotransferase subunit E (613 aa).

Belongs to the GatB/GatE family. GatE subfamily. As to quaternary structure, heterodimer of GatD and GatE.

The enzyme catalyses L-glutamyl-tRNA(Gln) + L-glutamine + ATP + H2O = L-glutaminyl-tRNA(Gln) + L-glutamate + ADP + phosphate + H(+). Its function is as follows. Allows the formation of correctly charged Gln-tRNA(Gln) through the transamidation of misacylated Glu-tRNA(Gln) in organisms which lack glutaminyl-tRNA synthetase. The reaction takes place in the presence of glutamine and ATP through an activated gamma-phospho-Glu-tRNA(Gln). The GatDE system is specific for glutamate and does not act on aspartate. This is Glutamyl-tRNA(Gln) amidotransferase subunit E from Archaeoglobus fulgidus (strain ATCC 49558 / DSM 4304 / JCM 9628 / NBRC 100126 / VC-16).